Consider the following 138-residue polypeptide: Large ribosomal subunit protein bL19 (138 aa).

This sequence belongs to the bacterial ribosomal protein bL19 family.

In terms of biological role, this protein is located at the 30S-50S ribosomal subunit interface and may play a role in the structure and function of the aminoacyl-tRNA binding site. The polypeptide is Large ribosomal subunit protein bL19 (Rickettsia africae (strain ESF-5)).